The primary structure comprises 217 residues: 3,4-dihydroxy-2-butanone 4-phosphate synthase (217 aa).

Residues R37–E38, D42, R150–T154, and E174 contribute to the D-ribulose 5-phosphate site. E38 is a binding site for Mg(2+). H153 contributes to the Mg(2+) binding site.

It belongs to the DHBP synthase family. As to quaternary structure, homodimer. The cofactor is Mg(2+). Mn(2+) is required as a cofactor.

The enzyme catalyses D-ribulose 5-phosphate = (2S)-2-hydroxy-3-oxobutyl phosphate + formate + H(+). The protein operates within cofactor biosynthesis; riboflavin biosynthesis; 2-hydroxy-3-oxobutyl phosphate from D-ribulose 5-phosphate: step 1/1. Functionally, catalyzes the conversion of D-ribulose 5-phosphate to formate and 3,4-dihydroxy-2-butanone 4-phosphate. This chain is 3,4-dihydroxy-2-butanone 4-phosphate synthase, found in Desulforapulum autotrophicum (strain ATCC 43914 / DSM 3382 / VKM B-1955 / HRM2) (Desulfobacterium autotrophicum).